Consider the following 390-residue polypeptide: Probable tRNA pseudouridine synthase D (390 aa).

Residue aspartate 93 is the Nucleophile of the active site. A TRUD domain is found at 166 to 353 (HVLNYFGIQR…YGTRRKLITP (188 aa)).

Belongs to the pseudouridine synthase TruD family.

The enzyme catalyses uridine(13) in tRNA = pseudouridine(13) in tRNA. Its function is as follows. Could be responsible for synthesis of pseudouridine from uracil-13 in transfer RNAs. This Methanococcus vannielii (strain ATCC 35089 / DSM 1224 / JCM 13029 / OCM 148 / SB) protein is Probable tRNA pseudouridine synthase D.